Reading from the N-terminus, the 251-residue chain is Octanoyltransferase (251 aa).

The BPL/LPL catalytic domain occupies 56-237 (ADTGDEIWVV…RLIANLDGES (182 aa)). Substrate-binding positions include 96–103 (RGGQITYH), 168–170 (ALG), and 181–183 (GLS). C199 functions as the Acyl-thioester intermediate in the catalytic mechanism.

The protein belongs to the LipB family.

It localises to the cytoplasm. It carries out the reaction octanoyl-[ACP] + L-lysyl-[protein] = N(6)-octanoyl-L-lysyl-[protein] + holo-[ACP] + H(+). It participates in protein modification; protein lipoylation via endogenous pathway; protein N(6)-(lipoyl)lysine from octanoyl-[acyl-carrier-protein]: step 1/2. In terms of biological role, catalyzes the transfer of endogenously produced octanoic acid from octanoyl-acyl-carrier-protein onto the lipoyl domains of lipoate-dependent enzymes. Lipoyl-ACP can also act as a substrate although octanoyl-ACP is likely to be the physiological substrate. This Burkholderia ambifaria (strain MC40-6) protein is Octanoyltransferase.